Consider the following 378-residue polypeptide: Peptide methionine sulfoxide reductase MsrA/MsrB (378 aa).

Residues 40–197 form a peptide methionine sulfoxide reductase A region; the sequence is QQATLAGGCF…KVRYNYYRYA (158 aa). The active site involves Cys48. The 123-residue stretch at 240–362 folds into the MsrB domain; it reads DEQIRAKLTS…NSAAMRFIPK (123 aa). Catalysis depends on Cys351, which acts as the Nucleophile.

This sequence in the N-terminal section; belongs to the MsrA Met sulfoxide reductase family. In the C-terminal section; belongs to the MsrB Met sulfoxide reductase family.

The catalysed reaction is L-methionyl-[protein] + [thioredoxin]-disulfide + H2O = L-methionyl-(S)-S-oxide-[protein] + [thioredoxin]-dithiol. It catalyses the reaction [thioredoxin]-disulfide + L-methionine + H2O = L-methionine (S)-S-oxide + [thioredoxin]-dithiol. The enzyme catalyses L-methionyl-[protein] + [thioredoxin]-disulfide + H2O = L-methionyl-(R)-S-oxide-[protein] + [thioredoxin]-dithiol. Its function is as follows. Has an important function as a repair enzyme for proteins that have been inactivated by oxidation. Catalyzes the reversible oxidation-reduction of methionine sulfoxide in proteins to methionine. This is Peptide methionine sulfoxide reductase MsrA/MsrB (msrAB) from Vibrio cholerae serotype O1 (strain ATCC 39315 / El Tor Inaba N16961).